We begin with the raw amino-acid sequence, 82 residues long: Protein transport protein SBH1 (82 aa).

A disordered region spans residues 1-36 (MSSPTPPGGQRTLQKRKQGSSQKVAASAPKKNTNSN). Topologically, residues 1-53 (MSSPTPPGGQRTLQKRKQGSSQKVAASAPKKNTNSNNSILKIYSDEATGLRVD) are cytoplasmic. Residues 19-36 (GSSQKVAASAPKKNTNSN) are compositionally biased toward polar residues. The chain crosses the membrane as a helical span at residues 54–74 (PLVVLFLAVGFIFSVVALHVI).

The protein belongs to the SEC61-beta family. As to quaternary structure, component of the heterotrimeric Sec61 complex, which is composed of SSH1, SBH1 and SSS1. Presumably three to four Sec61 heterotrimers assemble into an oligomeric ring with a central aqueous pore. In cotranslational ER import, the pore diameter varies from 9-15 A in a ribosome-free resting state to 40-60 A in a functional state when associated with the ribosome. The Sec61 complex is part of a channel-forming translocon complex whose composition seem to change dependent upon different functional states. During post-translational ER import the Sec61 complex associates with the Sec62/63 complex to form the Sec complex. SBH1 interacts OST2, OST4 and WBP1 components of the OT complex.

It is found in the endoplasmic reticulum membrane. Functionally, part of the Sec61 complex, which is the major component of a channel-forming translocon complex that mediates protein translocation across the endoplasmic reticulum (ER). The functional states of the translocon complex include co- and post-translational ER import, cotranslational membrane protein integration and retrograde transport of misfolded proteins out of the ER. In the cotranslational pathway, ribosomes synthesizing presecretory proteins are targeted to the translocon by the cytosolic signal recognition particle (SRP) and its ER-localized receptor. The association of the Sec61 complex with the ribosome is mediated by the 28S rRNA of the large ribosomal subunit. SRP-independent post-translational translocation requires the association of additional factors, such as the Sec62/63 complex and KAR2. This chain is Protein transport protein SBH1 (SBH1), found in Saccharomyces cerevisiae (strain ATCC 204508 / S288c) (Baker's yeast).